Consider the following 283-residue polypeptide: Lysozyme-like protein 7 (283 aa).

The first 18 residues, 1–18 (MAHKSIVIFSVLAVLCHS), serve as a signal peptide directing secretion. The Ch-type lysozyme domain occupies 53 to 273 (YAYALDIYVQ…AVEEDGKIYA (221 aa)).

This sequence belongs to the glycosyl hydrolase 25 family. In terms of tissue distribution, expressed in intestine. Expressed in rectal gland cells and head neurons.

Functionally, plays a role in resistance to Gram-positive bacteria B.thuringiensis and M.nematophilum and Gram-negative bacteria S.boydii or S.flexneri infection and to fungus C.neoformans infection. Plays a role in susceptibility to Gram-negative bacterium S.typhimurium infection. This chain is Lysozyme-like protein 7, found in Caenorhabditis elegans.